Reading from the N-terminus, the 431-residue chain is tRNA(Ile)-lysidine synthase (431 aa).

Residue 25–30 (SGGLDS) participates in ATP binding.

Belongs to the tRNA(Ile)-lysidine synthase family.

Its subcellular location is the cytoplasm. It catalyses the reaction cytidine(34) in tRNA(Ile2) + L-lysine + ATP = lysidine(34) in tRNA(Ile2) + AMP + diphosphate + H(+). Its function is as follows. Ligates lysine onto the cytidine present at position 34 of the AUA codon-specific tRNA(Ile) that contains the anticodon CAU, in an ATP-dependent manner. Cytidine is converted to lysidine, thus changing the amino acid specificity of the tRNA from methionine to isoleucine. The sequence is that of tRNA(Ile)-lysidine synthase from Legionella pneumophila (strain Lens).